Reading from the N-terminus, the 137-residue chain is Protein CTLA-2-alpha (137 aa).

Positions 1–27 are cleaved as a signal peptide; it reads MMVSICEQKLQHFSAVFLLILCLGMMS. A run of 2 repeats spans residues 39 to 41 and 42 to 44. A 2 X 3 AA tandem repeats of E-W-K region spans residues 39-44; the sequence is EWKEWK. Positions 114–137 are disordered; sequence APDLPEYEDLGKNSYLTPGRAQPE.

This sequence to the propeptide regions of cysteine proteases.

Its subcellular location is the secreted. Not known, expressed in activated T-cell. This Mus musculus (Mouse) protein is Protein CTLA-2-alpha (Ctla2a).